We begin with the raw amino-acid sequence, 297 residues long: Bifunctional protein FolD (297 aa).

NADP(+)-binding positions include 167–169 (GRS), Ser192, and Ile233.

This sequence belongs to the tetrahydrofolate dehydrogenase/cyclohydrolase family. In terms of assembly, homodimer.

It carries out the reaction (6R)-5,10-methylene-5,6,7,8-tetrahydrofolate + NADP(+) = (6R)-5,10-methenyltetrahydrofolate + NADPH. It catalyses the reaction (6R)-5,10-methenyltetrahydrofolate + H2O = (6R)-10-formyltetrahydrofolate + H(+). It participates in one-carbon metabolism; tetrahydrofolate interconversion. Functionally, catalyzes the oxidation of 5,10-methylenetetrahydrofolate to 5,10-methenyltetrahydrofolate and then the hydrolysis of 5,10-methenyltetrahydrofolate to 10-formyltetrahydrofolate. The chain is Bifunctional protein FolD from Caulobacter vibrioides (strain ATCC 19089 / CIP 103742 / CB 15) (Caulobacter crescentus).